We begin with the raw amino-acid sequence, 146 residues long: Small ribosomal subunit protein uS5 (146 aa).

Residues 8–71 form the S5 DRBM domain; it reads FEEVIVNIGR…DDAFKNIIDV (64 aa).

This sequence belongs to the universal ribosomal protein uS5 family. Part of the 30S ribosomal subunit. Contacts proteins S4 and S8.

In terms of biological role, with S4 and S12 plays an important role in translational accuracy. Its function is as follows. Located at the back of the 30S subunit body where it stabilizes the conformation of the head with respect to the body. This Campylobacter hominis (strain ATCC BAA-381 / DSM 21671 / CCUG 45161 / LMG 19568 / NCTC 13146 / CH001A) protein is Small ribosomal subunit protein uS5.